We begin with the raw amino-acid sequence, 262 residues long: Tryptophan synthase alpha chain (262 aa).

Active-site proton acceptor residues include Glu-49 and Asp-60.

This sequence belongs to the TrpA family. Tetramer of two alpha and two beta chains.

The enzyme catalyses (1S,2R)-1-C-(indol-3-yl)glycerol 3-phosphate + L-serine = D-glyceraldehyde 3-phosphate + L-tryptophan + H2O. It functions in the pathway amino-acid biosynthesis; L-tryptophan biosynthesis; L-tryptophan from chorismate: step 5/5. In terms of biological role, the alpha subunit is responsible for the aldol cleavage of indoleglycerol phosphate to indole and glyceraldehyde 3-phosphate. This is Tryptophan synthase alpha chain from Aquifex aeolicus (strain VF5).